We begin with the raw amino-acid sequence, 479 residues long: Integrin-linked protein kinase 1 (479 aa).

Phosphoserine is present on residues S17 and S26. The disordered stretch occupies residues 29–73 (FTRQSSLDPRRTNMRFSFGRQSSLDPIRRSPDSSKSDDEPHMSVP). Residues 54–69 (PIRRSPDSSKSDDEPH) are compositionally biased toward basic and acidic residues. 2 ANK repeats span residues 77 to 106 (DSTM…DVNS) and 110 to 139 (DGRT…NIDA). The Protein kinase domain maps to 194–461 (LEVQVRKSDG…EIIIRLDKIV (268 aa)). ATP is bound by residues 200–208 (KSDGISKGA) and K222. The Proton acceptor role is filled by D319.

Belongs to the protein kinase superfamily. Ser/Thr protein kinase family. In terms of assembly, interacts with CML9 and POT5/HAK5. In terms of processing, autophosphorylated at Ser-17 and Ser-26.

The protein localises to the cell membrane. It localises to the endoplasmic reticulum membrane. It catalyses the reaction L-seryl-[protein] + ATP = O-phospho-L-seryl-[protein] + ADP + H(+). The catalysed reaction is L-threonyl-[protein] + ATP = O-phospho-L-threonyl-[protein] + ADP + H(+). Kinase activity is suppressed by interaction with CML9. In terms of biological role, functions as a link between plant defense pathways, stress responses and potassium homeostasis. Promotes osmotic stress sensitivity, responses to the bacterial-derived pathogen-associated molecular pattern (PAMP) flg22, and resistance to bacterial pathogens. Promotes the accumulation of POT5/HAK5, a potassium transporter that mediates high-affinity uptake during potassium deficiency. The protein is Integrin-linked protein kinase 1 of Arabidopsis thaliana (Mouse-ear cress).